Reading from the N-terminus, the 437-residue chain is GTPase Obg (437 aa).

One can recognise an Obg domain in the interval 2-160 (SMFLDTAKIS…RQLELELKIL (159 aa)). Residues 161 to 338 (ADVGLVGFPS…LLEATAELLA (178 aa)) enclose the OBG-type G domain. GTP is bound by residues 167–174 (GFPSVGKS), 192–196 (FTTIV), 214–217 (DLPG), 284–287 (NKMD), and 319–321 (SSL). Mg(2+)-binding residues include S174 and T194. Positions 359-437 (GFAEAEKDFE…IGKFEFEFVD (79 aa)) constitute an OCT domain.

It belongs to the TRAFAC class OBG-HflX-like GTPase superfamily. OBG GTPase family. In terms of assembly, monomer. Mg(2+) serves as cofactor.

It is found in the cytoplasm. Its function is as follows. An essential GTPase which binds GTP, GDP and possibly (p)ppGpp with moderate affinity, with high nucleotide exchange rates and a fairly low GTP hydrolysis rate. Plays a role in control of the cell cycle, stress response, ribosome biogenesis and in those bacteria that undergo differentiation, in morphogenesis control. This is GTPase Obg from Streptococcus pyogenes serotype M18 (strain MGAS8232).